Reading from the N-terminus, the 414-residue chain is Myb1 protein (414 aa).

Myb-like domains are found at residues 242-266 (WNEV…LYYG), 268-320 (FEDD…IKIN), and 328-381 (KVKL…TNLN).

The protein localises to the nucleus. In terms of biological role, transcriptional activator. Has a role in the parasite erythrocytic cycle where it directly regulates key genes involved in cell cycle regulation and progression. Binds directly to Myb regulatory elements. This is Myb1 protein from Plasmodium falciparum (isolate 3D7).